A 729-amino-acid chain; its full sequence is Phosphoribosylformylglycinamidine synthase subunit PurL (729 aa).

Residue His-54 is part of the active site. Positions 57 and 96 each coordinate ATP. Glu-98 is a binding site for Mg(2+). Residues 99-102 (SHNH) and Arg-121 each bind substrate. The Proton acceptor role is filled by His-100. Position 122 (Asp-122) interacts with Mg(2+). A substrate-binding site is contributed by Gln-245. Asp-273 contacts Mg(2+). Position 317-319 (317-319 (ETQ)) interacts with substrate. The ATP site is built by Asp-495 and Gly-532. Asn-533 provides a ligand contact to Mg(2+). Ser-535 contributes to the substrate binding site.

This sequence belongs to the FGAMS family. In terms of assembly, monomer. Part of the FGAM synthase complex composed of 1 PurL, 1 PurQ and 2 PurS subunits.

Its subcellular location is the cytoplasm. The enzyme catalyses N(2)-formyl-N(1)-(5-phospho-beta-D-ribosyl)glycinamide + L-glutamine + ATP + H2O = 2-formamido-N(1)-(5-O-phospho-beta-D-ribosyl)acetamidine + L-glutamate + ADP + phosphate + H(+). It functions in the pathway purine metabolism; IMP biosynthesis via de novo pathway; 5-amino-1-(5-phospho-D-ribosyl)imidazole from N(2)-formyl-N(1)-(5-phospho-D-ribosyl)glycinamide: step 1/2. Functionally, part of the phosphoribosylformylglycinamidine synthase complex involved in the purines biosynthetic pathway. Catalyzes the ATP-dependent conversion of formylglycinamide ribonucleotide (FGAR) and glutamine to yield formylglycinamidine ribonucleotide (FGAM) and glutamate. The FGAM synthase complex is composed of three subunits. PurQ produces an ammonia molecule by converting glutamine to glutamate. PurL transfers the ammonia molecule to FGAR to form FGAM in an ATP-dependent manner. PurS interacts with PurQ and PurL and is thought to assist in the transfer of the ammonia molecule from PurQ to PurL. This Staphylococcus epidermidis (strain ATCC 35984 / DSM 28319 / BCRC 17069 / CCUG 31568 / BM 3577 / RP62A) protein is Phosphoribosylformylglycinamidine synthase subunit PurL.